A 376-amino-acid chain; its full sequence is uncharacterized protein (376 aa).

The chain crosses the membrane as a helical span at residues Y24–C44. H251 serves as a coordination point for Zn(2+).

This sequence belongs to the peptidase M23B family. It depends on Zn(2+) as a cofactor.

Its subcellular location is the cell membrane. This is an uncharacterized protein from Buchnera aphidicola subsp. Baizongia pistaciae (strain Bp).